We begin with the raw amino-acid sequence, 347 residues long: NADH-ubiquinone oxidoreductase chain 2 (347 aa).

The next 10 helical transmembrane spans lie at 3–23 (PPILIIILSTVISGTMIVLTS), 25–45 (HWLLTWIGFEMNMLAIIPILM), 59–79 (YFLTQATASMLLMMGIIINLL), 93–115 (MASTMMTIAMTMKLGLAPFHFWV), 149–169 (INTNLLMTMATMSVLIGGWGG), 178–198 (ILAYSSIAHMGWMVAIMTYNP), 200–220 (VMILNLMMYIMMTLTSFMLFI), 242–262 (SFILVLMLSLGGLPPLSGFIP), 274–294 (EMIILPTLLAITALLNLYFYM), and 323–343 (MALLPPLIIISTMLLPLTPMM).

This sequence belongs to the complex I subunit 2 family. Core subunit of respiratory chain NADH dehydrogenase (Complex I) which is composed of 45 different subunits. Interacts with TMEM242.

Its subcellular location is the mitochondrion inner membrane. It catalyses the reaction a ubiquinone + NADH + 5 H(+)(in) = a ubiquinol + NAD(+) + 4 H(+)(out). Its function is as follows. Core subunit of the mitochondrial membrane respiratory chain NADH dehydrogenase (Complex I) which catalyzes electron transfer from NADH through the respiratory chain, using ubiquinone as an electron acceptor. Essential for the catalytic activity and assembly of complex I. This is NADH-ubiquinone oxidoreductase chain 2 from Nandinia binotata (African palm civet).